The primary structure comprises 1834 residues: Non-reducing polyketide synthase spyA (1834 aa).

Positions 91–255 constitute a Starter acyltransferase (SAT) domain; the sequence is LAPLTVIIHL…TRIPIYGRYH (165 aa). The Ketosynthase family 3 (KS3) domain maps to 385–801; sequence EHSIAVIGAA…GNNTAVIVCE (417 aa). Catalysis depends on for beta-ketoacyl synthase activity residues cysteine 551, histidine 687, and histidine 724. In terms of domain architecture, Malonyl-CoA:ACP transacylase (MAT) spans 919–1164; sequence YEGSSLLRSH…KELGPCTWVE (246 aa). The interval 1269–1398 is N-terminal hotdog fold; the sequence is PLVYLLRDEG…GVISLRQERH (130 aa). The PKS/mFAS DH domain occupies 1269–1577; sequence PLVYLLRDEG…FVRITASSLN (309 aa). A product template (PT) domain region spans residues 1269 to 1577; the sequence is PLVYLLRDEG…FVRITASSLN (309 aa). The interval 1428 to 1577 is C-terminal hotdog fold; that stretch reads AISLKEGIIY…FVRITASSLN (150 aa). In terms of domain architecture, Carrier 1 spans 1616–1690; it reads SDILSILSHL…TLCQEIQTQR (75 aa). At serine 1650 the chain carries O-(pantetheine 4'-phosphoryl)serine. The segment at 1693 to 1720 is disordered; it reads RLARASRTTTATRNTSFSLGRRTSSTES. The segment covering 1697–1710 has biased composition (low complexity); the sequence is ASRTTTATRNTSFS. One can recognise a Carrier 2 domain in the interval 1731–1807; the sequence is SKSAAVLAQL…GLARLILASE (77 aa). Residue serine 1767 is modified to O-(pantetheine 4'-phosphoryl)serine.

Pantetheine 4'-phosphate is required as a cofactor.

It catalyses the reaction 2 malonyl-CoA + acetyl-CoA + 2 H(+) = triacetate lactone + 2 CO2 + 3 CoA. Its pathway is secondary metabolite biosynthesis; terpenoid biosynthesis. Functionally, non-reducing polyketide synthase; part of the gene cluster that mediates the biosynthesis of meroterpenoids called sartorypyrones. The biosynthesis of sartorypyrones begins with the production of triacetic acid lactone (TAL) by the NR-PKS spyA using one molecule of acetyl-CoA and two molecules of malonyl-CoA. As spyA lacks a thioesterase (TE) domain, TAL is likely generated through self-release from spyA by spontaneous lactonization. After production of TAL, the prenyltransferase spyF then conjugates geranylgeranyl pyrophosphate (GGPP) to TAL to form geranylgeranyl-triacetate lactone, for which the pathway-specific geranylgeranyl pyrophosphate synthase (GGPS) spyE is required to provide GGPP. Subsequently, geranylgeranyl-triacetate lactone is epoxidized at the terminal olein by the FAD-dependent monooxygenase spyC, followed by cyclization of the terpenoid component catalyzed by the terpene cyclase spyD to produce both the bicyclic sartorypyrone F and the monocyclic sartorypyrone D. Finally, the last step of the biosynthesis involves the acetylation of the meroterpenoids sartorypyrones D and F by the acetyltransferase SpyB to produce sartorypyrones A and G, respectively. The sequence is that of Non-reducing polyketide synthase spyA from Aspergillus fumigatus (strain ATCC MYA-4609 / CBS 101355 / FGSC A1100 / Af293) (Neosartorya fumigata).